The chain runs to 284 residues: Nucleotide-binding protein NMB0738 (284 aa).

8–15 lines the ATP pocket; sequence GLSGSGKS. Residue 58 to 61 participates in GTP binding; the sequence is DVRS.

Belongs to the RapZ-like family.

Displays ATPase and GTPase activities. The protein is Nucleotide-binding protein NMB0738 of Neisseria meningitidis serogroup B (strain ATCC BAA-335 / MC58).